The chain runs to 752 residues: Multifunctional tryptophan biosynthesis protein (752 aa).

The region spanning 3–202 is the Glutamine amidotransferase type-1 domain; that stretch reads FTLLIDNYDS…IQMKGGKWGG (200 aa). Residue 58 to 60 coordinates L-glutamine; that stretch reads GPG. Residue C86 is the Nucleophile; for GATase activity of the active site. Position 136–137 (136–137) interacts with L-glutamine; the sequence is SL. Catalysis depends on for GATase activity residues H176 and E178. Positions 231–495 are indole-3-glycerol phosphate synthase; it reads ILNKIHAQRL…DTKAFLRSLI (265 aa). Positions 509–752 are N-(5'-phosphoribosyl)anthranilate isomerase; that stretch reads LVKICGIRST…VEAFVKAVRG (244 aa).

It carries out the reaction N-(5-phospho-beta-D-ribosyl)anthranilate = 1-(2-carboxyphenylamino)-1-deoxy-D-ribulose 5-phosphate. It catalyses the reaction 1-(2-carboxyphenylamino)-1-deoxy-D-ribulose 5-phosphate + H(+) = (1S,2R)-1-C-(indol-3-yl)glycerol 3-phosphate + CO2 + H2O. The catalysed reaction is chorismate + L-glutamine = anthranilate + pyruvate + L-glutamate + H(+). The protein operates within amino-acid biosynthesis; L-tryptophan biosynthesis; L-tryptophan from chorismate: step 1/5. Its pathway is amino-acid biosynthesis; L-tryptophan biosynthesis; L-tryptophan from chorismate: step 3/5. It functions in the pathway amino-acid biosynthesis; L-tryptophan biosynthesis; L-tryptophan from chorismate: step 4/5. In terms of biological role, trifunctional enzyme bearing the Gln amidotransferase (GATase) domain of anthranilate synthase, indole-glycerolphosphate synthase, and phosphoribosylanthranilate isomerase activities. This is Multifunctional tryptophan biosynthesis protein (TRP1) from Cryptococcus neoformans var. grubii serotype A (strain H99 / ATCC 208821 / CBS 10515 / FGSC 9487) (Filobasidiella neoformans var. grubii).